A 507-amino-acid polypeptide reads, in one-letter code: MAMAAAKGRVLPLLAVAAALAAALLYRAPFSKSLGGEGCSLLPHDHFWIASERVVTLGRVGPAAVEVKGGLINAIAVGDYRSFLLRRPVVDYGDAVIMPGLIDVHAHLDEPGRAEWEGFSTGTRAAAAGGITTLVDMPLNSYPSTVSEETLKLKLDAAKDKLHVDVGFWGGLVPENALNPSALESLLNAGVLGLKSFMCPSGINDFPMTNSTHIEEGLVTLAKYKRPLLIHAERIPDVQNEDGIDGELDPKAYTTYLKSRPPAWEEAAIKDLQRAMKDTEIGGRSEGAHIHIVHLSDAKTSLGLLKDAKQNGARVSVETCPHYLAFSAEEVPDGDTRFKCAPPIRDSTNRDNLWEALLDGHIDMLSSDHSPSAPDLKLMEEGNFLRAWGGISSLQFVLPVTWSHGKKYGISLNQLASWWSERPAMLAGLKKKGAVLPGYRADIVVWKPEAQFHLDDSHPVYHKHRNISAYLGKQLSGKILSTFVGGNLVFAEDKHAKAACGAPILAK.

Zn(2+)-binding residues include His105, His107, Lys195, His231, His294, and Asp368. Lys195 is modified (N6-carboxylysine).

This sequence belongs to the metallo-dependent hydrolases superfamily. Allantoinase family. As to quaternary structure, homotetramer. The cofactor is Zn(2+). Carboxylation allows a single lysine to coordinate two zinc ions.

It catalyses the reaction (S)-allantoin + H2O = allantoate + H(+). The protein operates within nitrogen metabolism; (S)-allantoin degradation; allantoate from (S)-allantoin: step 1/1. Functionally, catalyzes the conversion of allantoin (5-ureidohydantoin) to allantoate by hydrolytic cleavage of the five-member hydantoin ring. Catalyzes the first step of the ureide allantoin degradation followed by the sequential activity of AAH, UGLYAH and UAH which allows a complete purine breakdown without the intermediate generation of urea. The chain is Probable allantoinase (ALN) from Oryza sativa subsp. japonica (Rice).